The primary structure comprises 102 residues: Protamine-2 (102 aa).

Phosphoserine occurs at positions 8, 10, and 37. Disordered stretches follow at residues 15 to 41 (EVYG…PEQV) and 66 to 102 (IHRQ…CRRH).

Belongs to the protamine P2 family. Interacts with TDRP. Proteolytic processing into mature chains is required for histone eviction during spermatogenesis. Transition proteins (TNP1 and TNP2) are required for processing. Testis.

Its subcellular location is the nucleus. The protein resides in the chromosome. Its function is as follows. Protamines substitute for histones in the chromatin of sperm during the haploid phase of spermatogenesis. They compact sperm DNA into a highly condensed, stable and inactive complex. In Pongo pygmaeus (Bornean orangutan), this protein is Protamine-2 (PRM2).